The primary structure comprises 545 residues: MDQYNKYITTNKRLGLVNWMLNVSRIFKLRSHTFQSAVNIMDSYFLKIDFEPNAEELSQTAVLCLKISSMICEIRPLFMDDVLYLLDIDTDNEFTNNIISSQLCTVELSILEKLNYKVYYLTIWKYIKQFWAKRNLPEQYYHLAYSLANILLSTNDYLRFDPKILADKIINICIVLEEDPECYETLIEDELEYQYIHLIWNRAYHKFKDYFNAVISTTLLSKHQVKVPPIQLSSNIKFPNSIFCTKIYPEKEFTMYSKKTVKKIDFQNKLGSGTYGSVYKITYDDNQIAMKKIRNKSTFVIDSNMIREVNNLMILSGHPNIINIEGYYYWDLTSTMYIGLDLMDTSLAIYLTKNNISESLKIKYVLQLLEAINYMHSKGIMHRDLSASNILIKGSTLKIGDFGSARFFSGDTLDTKYTRNVCSINYRAMELLMGIFPYNNKIDIWSCGCLITEILTGKRIFNGLKEAEVINKIHDILGVPDADSMNMSVFLSKSKIPLVTQGTLFTPLNLYPNQFPIIYQMLDYNPYKRPNAENCLKKIKESFDS.

Residues Arg13–Lys125 enclose the Cyclin N-terminal domain. The Protein kinase domain maps to Ile264–Phe543. ATP-binding positions include Leu270 to Val278 and Lys291. Asp384 serves as the catalytic Proton acceptor.

The protein belongs to the protein kinase superfamily. Ser/Thr protein kinase family.

It carries out the reaction L-seryl-[protein] + ATP = O-phospho-L-seryl-[protein] + ADP + H(+). It catalyses the reaction L-threonyl-[protein] + ATP = O-phospho-L-threonyl-[protein] + ADP + H(+). The polypeptide is Putative serine/threonine-protein kinase L673 (Acanthamoeba polyphaga (Amoeba)).